The sequence spans 125 residues: Small ribosomal subunit protein uS13 (125 aa).

The segment at 91–125 (HRRGLPARGQRTRTNARTRKGKRKTVAGKKKAGKK) is disordered.

Belongs to the universal ribosomal protein uS13 family. Part of the 30S ribosomal subunit. Forms a loose heterodimer with protein S19. Forms two bridges to the 50S subunit in the 70S ribosome.

In terms of biological role, located at the top of the head of the 30S subunit, it contacts several helices of the 16S rRNA. In the 70S ribosome it contacts the 23S rRNA (bridge B1a) and protein L5 of the 50S subunit (bridge B1b), connecting the 2 subunits; these bridges are implicated in subunit movement. Contacts the tRNAs in the A and P-sites. The protein is Small ribosomal subunit protein uS13 of Chloroherpeton thalassium (strain ATCC 35110 / GB-78).